The chain runs to 499 residues: Kynurenine 3-monooxygenase 3 (499 aa).

It belongs to the aromatic-ring hydroxylase family. KMO subfamily. FAD serves as cofactor.

The protein localises to the mitochondrion outer membrane. It carries out the reaction L-kynurenine + NADPH + O2 + H(+) = 3-hydroxy-L-kynurenine + NADP(+) + H2O. It functions in the pathway cofactor biosynthesis; NAD(+) biosynthesis; quinolinate from L-kynurenine: step 1/3. Its function is as follows. Catalyzes the hydroxylation of L-kynurenine (L-Kyn) to form 3-hydroxy-L-kynurenine (L-3OHKyn). Required for synthesis of quinolinic acid. The polypeptide is Kynurenine 3-monooxygenase 3 (bna4-3) (Aspergillus niger (strain ATCC MYA-4892 / CBS 513.88 / FGSC A1513)).